We begin with the raw amino-acid sequence, 119 residues long: Large ribosomal subunit protein bL20 (119 aa).

This sequence belongs to the bacterial ribosomal protein bL20 family.

Functionally, binds directly to 23S ribosomal RNA and is necessary for the in vitro assembly process of the 50S ribosomal subunit. It is not involved in the protein synthesizing functions of that subunit. In Neisseria gonorrhoeae (strain ATCC 700825 / FA 1090), this protein is Large ribosomal subunit protein bL20.